Reading from the N-terminus, the 55-residue chain is Protein CADMIUM TOLERANCE 2 (55 aa).

Residues 24–40 form a helical membrane-spanning segment; the sequence is GCLYACIFTALCCFCCY.

It belongs to the CYSTM1 family. Expressed only in roots.

The protein localises to the cell membrane. It localises to the secreted. The protein resides in the cell wall. In terms of biological role, confers resistance to heavy metal ions (e.g. cadmium (CdCl(2)) and copper (CuCl(2))) by chelating them at the plasma membrane of root cells, thus stopping their entry and reducing their accumulation. The chain is Protein CADMIUM TOLERANCE 2 from Oryza sativa subsp. japonica (Rice).